Consider the following 1014-residue polypeptide: Isoleucine--tRNA ligase (1014 aa).

The short motif at 48 to 58 (PTANGRPGIHH) is the 'HIGH' region element. The 'KMSKS' region signature appears at 628 to 632 (KMSKS). An ATP-binding site is contributed by lysine 631.

Belongs to the class-I aminoacyl-tRNA synthetase family. IleS type 2 subfamily. In terms of assembly, monomer. It depends on Zn(2+) as a cofactor.

The protein resides in the cytoplasm. It catalyses the reaction tRNA(Ile) + L-isoleucine + ATP = L-isoleucyl-tRNA(Ile) + AMP + diphosphate. Catalyzes the attachment of isoleucine to tRNA(Ile). As IleRS can inadvertently accommodate and process structurally similar amino acids such as valine, to avoid such errors it has two additional distinct tRNA(Ile)-dependent editing activities. One activity is designated as 'pretransfer' editing and involves the hydrolysis of activated Val-AMP. The other activity is designated 'posttransfer' editing and involves deacylation of mischarged Val-tRNA(Ile). This Dehalococcoides mccartyi (strain CBDB1) protein is Isoleucine--tRNA ligase.